A 241-amino-acid polypeptide reads, in one-letter code: Geranylgeranylglyceryl phosphate synthase (241 aa).

Residues Asp-19 and Ser-46 each coordinate Mg(2+). Sn-glycerol 1-phosphate contacts are provided by residues 167–173 (YLEAGSG), 198–199 (GG), and 220–221 (GT).

It belongs to the GGGP/HepGP synthase family. Group II subfamily. The cofactor is Mg(2+).

The protein resides in the cytoplasm. The enzyme catalyses sn-glycerol 1-phosphate + (2E,6E,10E)-geranylgeranyl diphosphate = sn-3-O-(geranylgeranyl)glycerol 1-phosphate + diphosphate. The protein operates within membrane lipid metabolism; glycerophospholipid metabolism. Its function is as follows. Prenyltransferase that catalyzes the transfer of the geranylgeranyl moiety of geranylgeranyl diphosphate (GGPP) to the C3 hydroxyl of sn-glycerol-1-phosphate (G1P). This reaction is the first ether-bond-formation step in the biosynthesis of archaeal membrane lipids. In Pyrobaculum calidifontis (strain DSM 21063 / JCM 11548 / VA1), this protein is Geranylgeranylglyceryl phosphate synthase.